The sequence spans 161 residues: Nucleotide-binding protein LHK_01423 (161 aa).

This sequence belongs to the YajQ family.

Nucleotide-binding protein. The protein is Nucleotide-binding protein LHK_01423 of Laribacter hongkongensis (strain HLHK9).